We begin with the raw amino-acid sequence, 1548 residues long: Lysine-specific demethylase 5D (1548 aa).

The JmjN domain occupies 14–55 (CPVFEPSWAEFRDPLGYIAKIRPIAEKSGICKIRPPADWQPP). In terms of domain architecture, ARID spans 79-169 (TRVKLNYLDQ…IIYPYEIFQS (91 aa)). Glycyl lysine isopeptide (Lys-Gly) (interchain with G-Cter in SUMO2) cross-links involve residues Lys205, Lys229, Lys244, and Lys279. The interval 208 to 229 (CYSRRGKRLQPEPEPTEEDIEK) is disordered. Phosphoserine occurs at positions 300 and 316. The PHD-type 1 zinc-finger motif lies at 325–371 (VCRICSRGDEVDKFLLCDGCSDNYHIFCLLPPLSEVPKGVWRCPKCI). Tyr439 lines the 2-oxoglutarate pocket. The JmjC domain occupies 467–633 (EYAACGWNLN…VGRQCIEHYR (167 aa)). Fe cation-binding residues include His513 and Glu515. Residues Ser521, Asn523, and Lys531 each coordinate 2-oxoglutarate. A Fe cation-binding site is contributed by His601. The segment at 706-758 (CIKCKTTCFLSALACYDCPDSLVCLSHINDLCKCSRNRQYLRYRYTLDELPAM) adopts a C5HC2 zinc-finger fold. A phosphoserine mark is found at Ser889 and Ser893. A Glycyl lysine isopeptide (Lys-Gly) (interchain with G-Cter in SUMO2) cross-link involves residue Lys1123. The PHD-type 2 zinc-finger motif lies at 1182 to 1243 (ICICGQVCAG…DTKFLCPLCM (62 aa)). Ser1355 carries the phosphoserine modification. The segment at 1438–1468 (KPENPGNWSEEQTPERRRQRRQKVVLSRKGE) is disordered.

It belongs to the JARID1 histone demethylase family. As to quaternary structure, interacts withPCGF6, MSH5, ZMYND8, AR. L-ascorbate serves as cofactor. The cofactor is Fe(2+).

It is found in the nucleus. The enzyme catalyses N(6),N(6),N(6)-trimethyl-L-lysyl(4)-[histone H3] + 3 2-oxoglutarate + 3 O2 = L-lysyl(4)-[histone H3] + 3 formaldehyde + 3 succinate + 3 CO2. Functionally, histone demethylase that specifically demethylates 'Lys-4' of histone H3, thereby playing a central role in histone code. Does not demethylate histone H3 'Lys-9', H3 'Lys-27', H3 'Lys-36', H3 'Lys-79' or H4 'Lys-20'. Demethylates trimethylated and dimethylated but not monomethylated H3 'Lys-4'. May play a role in spermatogenesis. Involved in transcriptional repression of diverse metastasis-associated genes; in this function seems to cooperate with ZMYND8. Suppresses prostate cancer cell invasion. Regulates androgen receptor (AR) transcriptional activity by demethylating H3K4me3 active transcription marks. The sequence is that of Lysine-specific demethylase 5D (Kdm5d) from Mus musculus (Mouse).